Reading from the N-terminus, the 544-residue chain is MNRCAEAAAVAATVPGSGVGDAGLRPPMVPRQASFFPPPVPNPFVQQTTISASRRLQMFLLGIILLPVRALLVGIILLLAWPFAVISTACCPEKLTHPISNWRRKITRPALTFLARAMFFSMGFTVTVKGKVASPLEAPIFVVAPHSTFFDGIACVVAGLPSLVSRNENAQTPLVGRLLRALQPVLVSRVDPDSRKNTINEIKKRATSGGEWPQILVFPEGTCTNRSCLITFKPGAFIPGVPVQPVLLRYPNKLDTVTWTWQGYTFLQLCVLTFCQLFTKVEIEFMPVQAPSEEEKNDPVLFASRIRNLMAEALEIPVTDHTYEDCRLMISAGQLTLPMEAGLVEFSKISRKLKLDWDGIRKHLDEYASIASSSKGGRIGIEEFAEYLKLPVSDVLRQLFALFDRNNDGSIDFREYVIGLAVLCNPANTEEIIQVAFKLFDVDEDGYITEEEFCTILQASLGVPDLNVSGLFREIAQRDSVSYEEFKSFALKHPEYAKIFTTYLDLQTCHVFSLPEEVQTAPSVASNKVSPESQEEGTSDKKVD.

At Met-1–Met-58 the chain is on the cytoplasmic side. A helical; Signal-anchor for type II membrane protein transmembrane segment spans residues Phe-59 to Leu-79. Over Ala-80–Asp-544 the chain is Lumenal. The short motif at His-146–Asp-151 is the HXXXXD motif element. The EGTC motif motif lies at Glu-220–Cys-223. EF-hand domains follow at residues Pro-391–Pro-426 and Asn-428–Val-463. Positions 404, 406, 408, 410, 415, 441, 443, 445, 447, and 452 each coordinate Ca(2+). The span at Thr-520–Glu-532 shows a compositional bias: polar residues. Residues Thr-520–Asp-544 form a disordered region.

It belongs to the 1-acyl-sn-glycerol-3-phosphate acyltransferase family. Highest expression is found in resident macrophages and casein-induced neutrophils followed by skin, colon, spleen and thioglycollate-induced macrophages. Detected in erythroleukemic cells but not in reticulocytes.

It is found in the endoplasmic reticulum membrane. It localises to the golgi apparatus membrane. The protein localises to the cell membrane. The protein resides in the lipid droplet. It carries out the reaction a 1-acyl-sn-glycero-3-phosphocholine + an acyl-CoA = a 1,2-diacyl-sn-glycero-3-phosphocholine + CoA. The catalysed reaction is a 1-O-alkyl-sn-glycero-3-phosphocholine + acetyl-CoA = a 1-O-alkyl-2-acetyl-sn-glycero-3-phosphocholine + CoA. The enzyme catalyses a 1-acyl-sn-glycero-3-phosphate + an acyl-CoA = a 1,2-diacyl-sn-glycero-3-phosphate + CoA. It catalyses the reaction a 1-O-(1Z-alkenyl)-sn-glycero-3-phosphocholine + an acyl-CoA = a 1-O-(1Z-alkenyl)-2-acyl-sn-glycero-3-phosphocholine + CoA. It carries out the reaction 1-O-octadecyl-sn-glycero-3-phosphocholine + acetyl-CoA = 1-O-octadecyl-2-acetyl-sn-glycero-3-phosphocholine + CoA. The catalysed reaction is 1-hexadecanoyl-sn-glycero-3-phosphocholine + acetyl-CoA = 1-hexadecanoyl-2-acetyl-sn-glycero-3-phosphocholine + CoA. The enzyme catalyses 1-octadecanoyl-sn-glycero-3-phosphocholine + acetyl-CoA = 1-octadecanoyl-2-acetyl-sn-glycero-3-phosphocholine + CoA. It catalyses the reaction a 1-O-(1Z-alkenyl)-sn-glycero-3-phosphocholine + acetyl-CoA = 1-O-(1Z)-alkenyl-2-acetyl-sn-glycero-3-phosphocholine + CoA. It carries out the reaction 1-O-hexadecyl-sn-glycero-3-phosphocholine + acetyl-CoA = 1-O-hexadecyl-2-acetyl-sn-glycero-3-phosphocholine + CoA. The catalysed reaction is 1-O-octadecyl-sn-glycero-3-phosphocholine + (5Z,8Z,11Z,14Z)-eicosatetraenoyl-CoA = 1-O-octadecyl-2-(5Z,8Z,11Z,14Z)-eicosatetraenoyl-sn-glycero-3-phosphocholine + CoA. The enzyme catalyses 1-hexadecanoyl-sn-glycero-3-phosphate + (9Z)-octadecenoyl-CoA = 1-hexadecanoyl-2-(9Z-octadecenoyl)-sn-glycero-3-phosphate + CoA. It catalyses the reaction 1-(9Z-octadecenoyl)-sn-glycero-3-phosphate + (9Z)-octadecenoyl-CoA = 1,2-di-(9Z-octadecenoyl)-sn-glycero-3-phosphate + CoA. It carries out the reaction 1-(9Z-octadecenoyl)-sn-glycero-3-phosphate + hexadecanoyl-CoA = 1-(9Z)-octadecenoyl-2-hexadecanoyl-sn-glycero-3-phosphate + CoA. The catalysed reaction is 1-heptadecanoyl-sn-glycero-3-phosphate + (9Z)-octadecenoyl-CoA = 1-heptadecanoyl-2-(9Z)-octadecenoyl-sn-glycero-3-phosphate + CoA. The enzyme catalyses 1-octadecanoyl-sn-glycero-3-phosphate + (9Z)-octadecenoyl-CoA = 1-octadecanoyl-2-(9Z-octadecenoyl)-sn-glycero-3-phosphate + CoA. It catalyses the reaction heptadecanoyl-CoA + 1-(9Z-octadecenoyl)-sn-glycero-3-phosphate = 1-(9Z)-octadecenoyl-2-heptadecanoyl-sn-glycero-3-phosphate + CoA. It carries out the reaction 1-(9Z-octadecenoyl)-sn-glycero-3-phosphate + (9Z,12Z)-octadecadienoyl-CoA = 1-(9Z)-octadecenoyl-2-(9Z,12Z)-octadecadienoyl-sn-glycero-3-phosphate + CoA. The catalysed reaction is 1-(9Z-octadecenoyl)-sn-glycero-3-phosphate + tetradecanoyl-CoA = 1-(9Z)-octadecenoyl-2-tetradecanoyl-sn-glycero-3-phosphate + CoA. The enzyme catalyses pentadecanoyl-CoA + 1-(9Z-octadecenoyl)-sn-glycero-3-phosphate = 1-(9Z)-octadecenoyl-2-pentadecanoyl-sn-glycero-3-phosphate + CoA. It catalyses the reaction nonadecanoyl-CoA + 1-(9Z-octadecenoyl)-sn-glycero-3-phosphate = 1-(9Z)-octadecenoyl-2-nonadecanoyl-sn-glycero-3-phosphate + CoA. It carries out the reaction 1-hexadecanoyl-sn-glycero-3-phosphocholine + (9Z)-octadecenoyl-CoA = 1-hexadecanoyl-2-(9Z-octadecenoyl)-sn-glycero-3-phosphocholine + CoA. The protein operates within lipid metabolism; phospholipid metabolism. Acetyltransferase activity is increased following acute inflammatory stimulation by lipopolysaccharide (LPS). Acyltransferase activity is unchanged. Functionally, exhibits both acyltransferase and acetyltransferase activities. Activity is calcium-dependent. Catalyzes the conversion of lysophosphatidylcholine (1-acyl-sn-glycero-3-phosphocholine or LPC) into phosphatidylcholine (1,2-diacyl-sn-glycero-3-phosphocholine or PC). Catalyzes the conversion 1-acyl-sn-glycerol-3-phosphate (lysophosphatidic acid or LPA) into 1,2-diacyl-sn-glycerol-3-phosphate (phosphatidic acid or PA) by incorporating an acyl moiety at the sn-2 position of the glycerol backbone. Involved in platelet-activating factor (PAF) biosynthesis by catalyzing the conversion of the PAF precursor, 1-O-alkyl-sn-glycero-3-phosphocholine (lyso-PAF) into 1-O-alkyl-2-acetyl-sn-glycero-3-phosphocholine (PAF). Also converts lyso-PAF to 1-O-alkyl-2-acyl-sn-glycero-3-phosphocholine (PC), a major component of cell membranes and a PAF precursor. Under resting conditions, acyltransferase activity is preferred. Upon acute inflammatory stimulus, acetyltransferase activity is enhanced and PAF synthesis increases. Involved in the regulation of lipid droplet number and size. This is Lysophosphatidylcholine acyltransferase 2 (Lpcat2) from Mus musculus (Mouse).